A 919-amino-acid chain; its full sequence is GPI ethanolamine phosphate transferase 1 (919 aa).

Over Met-1 to Leu-9 the chain is Cytoplasmic. The helical transmembrane segment at Leu-10–Ile-30 threads the bilayer. At Ser-31 to Thr-457 the chain is on the lumenal side. Asn-90, Asn-138, Asn-198, Asn-202, Asn-286, and Asn-312 each carry an N-linked (GlcNAc...) asparagine glycan. A helical transmembrane segment spans residues Ile-458–Phe-478. Residues Ile-479–Lys-488 are Cytoplasmic-facing. Residues Ala-489–Phe-509 form a helical membrane-spanning segment. At Tyr-510 to His-512 the chain is on the lumenal side. A helical membrane pass occupies residues Ser-513–Thr-533. The Cytoplasmic portion of the chain corresponds to Asn-534–Lys-553. Residues Arg-554–His-574 form a helical membrane-spanning segment. Residues Arg-575–Trp-576 lie on the Lumenal side of the membrane. The helical transmembrane segment at Thr-577–Leu-597 threads the bilayer. Residue Ser-598 is a topological domain, cytoplasmic. A helical membrane pass occupies residues Val-599–Val-619. Topologically, residues Lys-620–Gln-626 are lumenal. A helical transmembrane segment spans residues Ile-627–Ser-647. At Arg-648 to Ala-655 the chain is on the cytoplasmic side. The chain crosses the membrane as a helical span at residues Ile-656–Ile-676. Residues Ser-677–Glu-687 are Lumenal-facing. A helical membrane pass occupies residues Ser-688–Tyr-708. Residues Arg-709–Leu-720 are Cytoplasmic-facing. A helical transmembrane segment spans residues Ile-721–Phe-741. The Lumenal segment spans residues Tyr-742–Val-776. Residues Ser-777–Ile-797 traverse the membrane as a helical segment. Residues Ser-798–Arg-807 are Cytoplasmic-facing. The helical transmembrane segment at Leu-808 to Pro-828 threads the bilayer. The Lumenal portion of the chain corresponds to Tyr-829 to Tyr-848. A helical membrane pass occupies residues Thr-849–Leu-869. Residues Arg-870–Tyr-885 lie on the Cytoplasmic side of the membrane. The chain crosses the membrane as a helical span at residues Cys-886–Leu-906. Topologically, residues Lys-907–Gln-919 are lumenal.

Belongs to the PIGG/PIGN/PIGO family. PIGN subfamily. In terms of assembly, interacts with CSF1; CSF1 channels phosphatidylethanolamine to MCD4 in the endoplasmic reticulum at contact sites to support GPI anchor biosynthesis. In terms of processing, N-glycosylated.

The protein localises to the endoplasmic reticulum membrane. The protein resides in the golgi apparatus membrane. It localises to the vacuole membrane. It participates in glycolipid biosynthesis; glycosylphosphatidylinositol-anchor biosynthesis. In terms of biological role, ethanolamine phosphate transferase involved in glycosylphosphatidylinositol-anchor biosynthesis. Transfers ethanolamine phosphate to the first alpha-1,4-linked mannose of the glycosylphosphatidylinositol precursor of GPI-anchor. Ethanolamine phosphate on the alpha-1,4-linked mannose is essential for further mannosylation by GPI10 and is necessary for an efficient recognition of GPI lipids and GPI proteins by the GPI transamidase, for the efficient transport of GPI anchored proteins from endoplasmic reticulum to Golgi and for the physiological incorporation of ceramides into GPI anchors by lipid remodeling. Also involved in non-mitochondrial ATP movements across membrane and participates in Golgi and endoplasmic reticulum function, Also required for the incorporation of BGL2 into the cell wall. The chain is GPI ethanolamine phosphate transferase 1 (MCD4) from Saccharomyces cerevisiae (strain ATCC 204508 / S288c) (Baker's yeast).